The primary structure comprises 114 residues: uncharacterized protein (114 aa).

3 helical membrane passes run 21-41 (LASSLLISFSSFLFISSVCLF), 65-85 (GCFSSSFLSLSCLMSTLSALI), and 93-113 (LSVFTVVVSASLGSVFTILTD).

It is found in the membrane. This is an uncharacterized protein from Saccharomyces cerevisiae (strain ATCC 204508 / S288c) (Baker's yeast).